The chain runs to 574 residues: Proline--tRNA ligase (574 aa).

Belongs to the class-II aminoacyl-tRNA synthetase family. ProS type 1 subfamily. As to quaternary structure, homodimer.

The protein localises to the cytoplasm. The enzyme catalyses tRNA(Pro) + L-proline + ATP = L-prolyl-tRNA(Pro) + AMP + diphosphate. In terms of biological role, catalyzes the attachment of proline to tRNA(Pro) in a two-step reaction: proline is first activated by ATP to form Pro-AMP and then transferred to the acceptor end of tRNA(Pro). As ProRS can inadvertently accommodate and process non-cognate amino acids such as alanine and cysteine, to avoid such errors it has two additional distinct editing activities against alanine. One activity is designated as 'pretransfer' editing and involves the tRNA(Pro)-independent hydrolysis of activated Ala-AMP. The other activity is designated 'posttransfer' editing and involves deacylation of mischarged Ala-tRNA(Pro). The misacylated Cys-tRNA(Pro) is not edited by ProRS. This is Proline--tRNA ligase from Nitrosococcus oceani (strain ATCC 19707 / BCRC 17464 / JCM 30415 / NCIMB 11848 / C-107).